The primary structure comprises 252 residues: Type III pantothenate kinase (252 aa).

6–13 serves as a coordination point for ATP; sequence DIGNTSTA. 104 to 107 lines the substrate pocket; it reads GADR. Residue aspartate 106 is the Proton acceptor of the active site. Aspartate 128 provides a ligand contact to K(+). Threonine 131 is a binding site for ATP. Residue threonine 183 coordinates substrate.

The protein belongs to the type III pantothenate kinase family. In terms of assembly, homodimer. NH4(+) serves as cofactor. The cofactor is K(+).

It is found in the cytoplasm. The enzyme catalyses (R)-pantothenate + ATP = (R)-4'-phosphopantothenate + ADP + H(+). It participates in cofactor biosynthesis; coenzyme A biosynthesis; CoA from (R)-pantothenate: step 1/5. Its function is as follows. Catalyzes the phosphorylation of pantothenate (Pan), the first step in CoA biosynthesis. In Thermus thermophilus (strain ATCC 27634 / DSM 579 / HB8), this protein is Type III pantothenate kinase.